A 532-amino-acid chain; its full sequence is Putative cysteine desulfurase PbSufS (532 aa).

Residues 1–18 (MNNESICILLLLFVKITS) form the signal peptide. Lysine 286 is modified (N6-(pyridoxal phosphate)lysine). The active-site Cysteine persulfide intermediate is the cysteine 480.

Belongs to the class-V pyridoxal-phosphate-dependent aminotransferase family. Csd subfamily. Monomer. Interacts with SufE; interaction enhances cysteine desulfurase activity of SufS. Requires pyridoxal 5'-phosphate as cofactor.

The protein localises to the plastid. It is found in the apicoplast. The enzyme catalyses (sulfur carrier)-H + L-cysteine = (sulfur carrier)-SH + L-alanine. Its pathway is cofactor biosynthesis; iron-sulfur cluster biosynthesis. Catalyzes sulfur activation and mobilization in sulfur mobilization (SUF) pathway for iron-sulfur (Fe-S) cluster biogenesis. Active when in complex with a partner protein SufE. Required for apicoplast maintenance. Plays a role in the development of sporozoites in oocysts in mosquitoes. The sequence is that of Putative cysteine desulfurase PbSufS from Plasmodium berghei (strain Anka).